The primary structure comprises 206 residues: Small ribosomal subunit protein uS4 (206 aa).

An S4 RNA-binding domain is found at 96–156 (SRLDNVVYRM…EKSRNQSRIA (61 aa)).

The protein belongs to the universal ribosomal protein uS4 family. As to quaternary structure, part of the 30S ribosomal subunit. Contacts protein S5. The interaction surface between S4 and S5 is involved in control of translational fidelity.

Its function is as follows. One of the primary rRNA binding proteins, it binds directly to 16S rRNA where it nucleates assembly of the body of the 30S subunit. With S5 and S12 plays an important role in translational accuracy. In Hydrogenovibrio crunogenus (strain DSM 25203 / XCL-2) (Thiomicrospira crunogena), this protein is Small ribosomal subunit protein uS4.